A 399-amino-acid polypeptide reads, in one-letter code: Lysosomal acid lipase/cholesteryl ester hydrolase (399 aa).

An N-terminal signal peptide occupies residues 1 to 27 (MKMRFLGLVVCLVLWTLHSEASGGKLT). The propeptide at 28 to 76 (AVNPETNMNVSEIISYWGFPSEEYLVETEDGYILCLNRIPHGRKNHSDK) is removed in mature form. N-linked (GlcNAc...) asparagine glycosylation is found at asparagine 36, asparagine 72, asparagine 101, and asparagine 161. The region spanning 80–380 (PVVFLQHGLL…EWEHLDFIWG (301 aa)) is the AB hydrolase-1 domain. The active-site Charge relay system is the serine 174. Residues asparagine 273 and asparagine 321 are each glycosylated (N-linked (GlcNAc...) asparagine). The active-site Charge relay system is histidine 374.

Belongs to the AB hydrolase superfamily. Lipase family. As to quaternary structure, monomer. Glycosylation is not essential for catalytic activity.

It is found in the lysosome. The enzyme catalyses a sterol ester + H2O = a sterol + a fatty acid + H(+). It catalyses the reaction cholesteryl (9Z-octadecenoate) + H2O = cholesterol + (9Z)-octadecenoate + H(+). It carries out the reaction a triacylglycerol + H2O = a 1,2-diacylglycerol + a fatty acid + H(+). The catalysed reaction is 1,2-di-(9Z-octadecenoyl)-glycerol + (9Z)-octadecenoate + H(+) = 1,2,3-tri-(9Z-octadecenoyl)-glycerol + H2O. The enzyme catalyses a 1,2-diacylglycerol + H2O = a 1-acylglycerol + a fatty acid + H(+). It catalyses the reaction 1,2-di-(9Z-octadecenoyl)-glycerol + H2O = 1-(9Z-octadecenoyl)-glycerol + (9Z)-octadecenoate + H(+). It carries out the reaction a 1,3-diacylglycerol + H2O = a 1-acylglycerol + a fatty acid + H(+). The catalysed reaction is 1,3-di-(9Z-octadecenoyl)-glycerol + H2O = 1-(9Z-octadecenoyl)-glycerol + (9Z)-octadecenoate + H(+). Its function is as follows. Catalyzes the deacylation of cholesteryl ester core lipids of endocytosed low density lipoproteins to generate free fatty acids and cholesterol. Hydrolyzes triglycerides (1,2,3-triacylglycerol) and diglycerides (such as 1,2-diacylglycerol and 1,3-diacylglycerol) with preference for the acyl moieties at the sn-1 or sn-3 positions. The protein is Lysosomal acid lipase/cholesteryl ester hydrolase (LIPA) of Macaca fascicularis (Crab-eating macaque).